Here is a 554-residue protein sequence, read N- to C-terminus: Oxygen-dependent choline dehydrogenase (554 aa).

Position 4–33 (4–33) interacts with FAD; it reads DYIIIGAGSAGNVLATRLTEDPNTTVLLLE. Residue H473 is the Proton acceptor of the active site.

This sequence belongs to the GMC oxidoreductase family. FAD is required as a cofactor.

The catalysed reaction is choline + A = betaine aldehyde + AH2. It catalyses the reaction betaine aldehyde + NAD(+) + H2O = glycine betaine + NADH + 2 H(+). Its pathway is amine and polyamine biosynthesis; betaine biosynthesis via choline pathway; betaine aldehyde from choline (cytochrome c reductase route): step 1/1. Its function is as follows. Involved in the biosynthesis of the osmoprotectant glycine betaine. Catalyzes the oxidation of choline to betaine aldehyde and betaine aldehyde to glycine betaine at the same rate. The polypeptide is Oxygen-dependent choline dehydrogenase (Klebsiella pneumoniae (strain 342)).